An 80-amino-acid chain; its full sequence is Cytochrome c oxidase subunit 7B, mitochondrial (80 aa).

The N-terminal 24 residues, 1–24 (MLPLAKNALSRLQVRSIQQVVARQ), are a transit peptide targeting the mitochondrion. Residues 25-39 (SHQKRAPSFHDKYGN) lie on the Mitochondrial matrix side of the membrane. Residues 40 to 60 (AILAGGAIFCVSTWTYTATQI) form a helical membrane-spanning segment. The Mitochondrial intermembrane segment spans residues 61–80 (GIEWNMSPVGRVTPKEWRDQ).

Belongs to the cytochrome c oxidase VIIb family. Component of the cytochrome c oxidase (complex IV, CIV), a multisubunit enzyme composed of 14 subunits. The complex is composed of a catalytic core of 3 subunits MT-CO1, MT-CO2 and MT-CO3, encoded in the mitochondrial DNA, and 11 supernumerary subunits COX4I, COX5A, COX5B, COX6A, COX6B, COX6C, COX7A, COX7B, COX7C, COX8 and NDUFA4, which are encoded in the nuclear genome. The complex exists as a monomer or a dimer and forms supercomplexes (SCs) in the inner mitochondrial membrane with NADH-ubiquinone oxidoreductase (complex I, CI) and ubiquinol-cytochrome c oxidoreductase (cytochrome b-c1 complex, complex III, CIII), resulting in different assemblies (supercomplex SCI(1)III(2)IV(1) and megacomplex MCI(2)III(2)IV(2)).

The protein localises to the mitochondrion inner membrane. Its pathway is energy metabolism; oxidative phosphorylation. In terms of biological role, component of the cytochrome c oxidase, the last enzyme in the mitochondrial electron transport chain which drives oxidative phosphorylation. The respiratory chain contains 3 multisubunit complexes succinate dehydrogenase (complex II, CII), ubiquinol-cytochrome c oxidoreductase (cytochrome b-c1 complex, complex III, CIII) and cytochrome c oxidase (complex IV, CIV), that cooperate to transfer electrons derived from NADH and succinate to molecular oxygen, creating an electrochemical gradient over the inner membrane that drives transmembrane transport and the ATP synthase. Cytochrome c oxidase is the component of the respiratory chain that catalyzes the reduction of oxygen to water. Electrons originating from reduced cytochrome c in the intermembrane space (IMS) are transferred via the dinuclear copper A center (CU(A)) of subunit 2 and heme A of subunit 1 to the active site in subunit 1, a binuclear center (BNC) formed by heme A3 and copper B (CU(B)). The BNC reduces molecular oxygen to 2 water molecules using 4 electrons from cytochrome c in the IMS and 4 protons from the mitochondrial matrix. Plays a role in proper central nervous system (CNS) development in vertebrates. The sequence is that of Cytochrome c oxidase subunit 7B, mitochondrial (Cox7b) from Mus musculus (Mouse).